We begin with the raw amino-acid sequence, 62 residues long: Translational regulator CsrA 3 (62 aa).

It belongs to the CsrA/RsmA family. In terms of assembly, homodimer; the beta-strands of each monomer intercalate to form a hydrophobic core, while the alpha-helices form wings that extend away from the core.

It localises to the cytoplasm. Its function is as follows. A key translational regulator that binds mRNA to regulate translation initiation and/or mRNA stability. Mediates global changes in gene expression, shifting from rapid growth to stress survival by linking envelope stress, the stringent response and the catabolite repression systems. Usually binds in the 5'-UTR; binding at or near the Shine-Dalgarno sequence prevents ribosome-binding, repressing translation, binding elsewhere in the 5'-UTR can activate translation and/or stabilize the mRNA. Its function is antagonized by small RNA(s). This is Translational regulator CsrA 3 from Pseudomonas syringae pv. tomato (strain ATCC BAA-871 / DC3000).